Consider the following 101-residue polypeptide: Replication restart protein PriB (101 aa).

One can recognise an SSB domain in the interval 1-101; that stretch reads MTTNNLVLSG…IHAENVELKT (101 aa).

Belongs to the PriB family. In terms of assembly, homodimer. Interacts with PriA and DnaT. Component of the replication restart primosome. Primosome assembly occurs via a 'hand-off' mechanism. PriA binds to replication forks, subsequently PriB then DnaT bind; DnaT then displaces ssDNA to generate the helicase loading substrate.

Involved in the restart of stalled replication forks, which reloads the replicative helicase on sites other than the origin of replication; the PriA-PriB pathway is the major replication restart pathway. During primosome assembly it facilitates complex formation between PriA and DnaT on DNA; stabilizes PriA on DNA. Stimulates the DNA unwinding activity of PriA helicase. This Shewanella baltica (strain OS223) protein is Replication restart protein PriB.